A 494-amino-acid chain; its full sequence is PTS system cellobiose-specific EIIC component (494 aa).

Positions 8–481 constitute a PTS EIIC type-3 domain; it reads MEKYLVPVAA…IITFVIWVPF (474 aa). 9 consecutive transmembrane segments (helical) span residues 32–52, 92–112, 119–139, 188–208, 227–247, 274–294, 355–375, 406–426, and 463–483; these read FIGM…SAIV, ISAL…AFSW, AYGV…FAGL, AYFT…KLML, FLAI…YYII, IFSV…GLHG, AFAW…IILF, VVLN…SVII, and AIVL…PFVI.

It localises to the cell membrane. Functionally, the phosphoenolpyruvate-dependent sugar phosphotransferase system (PTS), a major carbohydrate active transport system, catalyzes the phosphorylation of incoming sugar substrates concomitant with their translocation across the cell membrane. Involved in cellobiose transport with PtcA and PtcB. This system can also transport lactose. The chain is PTS system cellobiose-specific EIIC component from Lactococcus lactis subsp. lactis (strain IL1403) (Streptococcus lactis).